The following is a 346-amino-acid chain: Glucose-6-phosphatase 3 (346 aa).

At 1-25 (MESTLSAGIMMAEALQNQLPGLENM) the chain is on the lumenal side. A helical membrane pass occupies residues 26-46 (WLWVTFLADPKNLFQFYFPAV). The Cytoplasmic segment spans residues 47-56 (YYASRRLGIS). The helical transmembrane segment at 57 to 77 (LFWIAFITEWLNLVFKWFLFG) threads the bilayer. The Lumenal portion of the chain corresponds to 78–115 (DRPFWWVHESGYSAQTPVQIHQFPSSCETGPGSPSGHC). R79 is a substrate binding site. H114 acts as the Proton donor in catalysis. A helical membrane pass occupies residues 116–135 (MITGAALWPVMIAISSQVAS). At 136–140 (QTRSP) the chain is on the cytoplasmic side. The helical transmembrane segment at 141–162 (WVRVIPGLAYCTFLLAVGLSRV) threads the bilayer. R161 lines the substrate pocket. Over 163–167 (FLLAH) the chain is Lumenal. Residue H167 is the Nucleophile of the active site. The chain crosses the membrane as a helical span at residues 168-186 (FPHQVLAGLLAGVILGWLL). Over 187–197 (SPRVPMERELS) the chain is Cytoplasmic. Residues 198–218 (FYGLTALTLMLGASLMYWTLF) traverse the membrane as a helical segment. At 219 to 254 (TLGLDLSWSINLASKWCDRPEWVLVDSRPFASLSRD) the chain is on the lumenal side. The chain crosses the membrane as a helical span at residues 255 to 273 (SGSALGLGIALHTPCYAQI). Residues 274-283 (RRVHLGNGQK) are Cytoplasmic-facing. A helical transmembrane segment spans residues 284–304 (IACFVLAMGLLVFLEWLGHPP). The Lumenal segment spans residues 305-307 (QIS). A helical transmembrane segment spans residues 308-328 (LFYIFNFLKFTLWPCLVVALV). The Cytoplasmic portion of the chain corresponds to 329–346 (PWMVHTLSAQEAPPIRSS).

This sequence belongs to the glucose-6-phosphatase family. Expressed in liver and kidney. It is the major glucose-6-phosphatase expressed in the small intestine.

It is found in the endoplasmic reticulum membrane. The enzyme catalyses D-glucose 6-phosphate + H2O = D-glucose + phosphate. The protein operates within carbohydrate biosynthesis; gluconeogenesis. Its activity is regulated as follows. Inhibited by vanadate. Hydrolyzes glucose-6-phosphate to glucose in the endoplasmic reticulum. May form with the glucose-6-phosphate transporter (SLC37A4/G6PT) a ubiquitously expressed complex responsible for glucose production through glycogenolysis and gluconeogenesis. Probably required for normal neutrophil function. In Rattus norvegicus (Rat), this protein is Glucose-6-phosphatase 3 (G6pc3).